We begin with the raw amino-acid sequence, 148 residues long: MKVILTENLSSLGQIGQVVNVAPGYARNYLFPQGLALEATGKNVKELDHRKRVLAAKREKIRQEMLSVAEKINQVKLVLRRKVADEDKLYGSVSAADIQSALEERGFIVARKDIQLDQPIKQLGEFTVSVRVDAQIAATVGVVVEKEE.

The protein belongs to the bacterial ribosomal protein bL9 family.

Its function is as follows. Binds to the 23S rRNA. The chain is Large ribosomal subunit protein bL9 from Syntrophobacter fumaroxidans (strain DSM 10017 / MPOB).